Consider the following 307-residue polypeptide: Small ribosomal subunit biogenesis GTPase RsgA (307 aa).

Residues 80-237 (KVDLRQAIVS…IVDTPGIKEF (158 aa)) enclose the CP-type G domain. GTP-binding positions include 129–132 (NKID) and 180–188 (GQSGVGKSS). Zn(2+) is bound by residues Cys-261, Cys-266, His-268, and Cys-274.

This sequence belongs to the TRAFAC class YlqF/YawG GTPase family. RsgA subfamily. Monomer. Associates with 30S ribosomal subunit, binds 16S rRNA. Requires Zn(2+) as cofactor.

It is found in the cytoplasm. Functionally, one of several proteins that assist in the late maturation steps of the functional core of the 30S ribosomal subunit. Helps release RbfA from mature subunits. May play a role in the assembly of ribosomal proteins into the subunit. Circularly permuted GTPase that catalyzes slow GTP hydrolysis, GTPase activity is stimulated by the 30S ribosomal subunit. This chain is Small ribosomal subunit biogenesis GTPase RsgA, found in Borrelia garinii subsp. bavariensis (strain ATCC BAA-2496 / DSM 23469 / PBi) (Borreliella bavariensis).